We begin with the raw amino-acid sequence, 537 residues long: Probable sterol O-acyltransferase 1 (537 aa).

The next 4 helical transmembrane spans lie at F98 to A118, F140 to L160, L174 to V194, and F199 to F219. A glycan (N-linked (GlcNAc...) asparagine) is linked at N250. 2 consecutive transmembrane segments (helical) span residues F344–A364 and I384–L404. The FYXDWWN motif signature appears at F418 to N424. The next 2 helical transmembrane spans lie at A462 to T482 and V517 to F537. H474 is a catalytic residue.

It belongs to the membrane-bound acyltransferase family. Sterol o-acyltransferase subfamily.

It is found in the endoplasmic reticulum membrane. Its function is as follows. Sterol O-acyltransferase that catalyzes the formation of stery esters. The polypeptide is Probable sterol O-acyltransferase 1 (are1) (Schizosaccharomyces pombe (strain 972 / ATCC 24843) (Fission yeast)).